The following is a 145-amino-acid chain: Deoxyuridine 5'-triphosphate nucleotidohydrolase (145 aa).

Residues 63-65 (RSG), Q76, and 80-82 (TVD) each bind substrate.

Belongs to the dUTPase family. Mg(2+) is required as a cofactor.

It carries out the reaction dUTP + H2O = dUMP + diphosphate + H(+). It functions in the pathway pyrimidine metabolism; dUMP biosynthesis; dUMP from dCTP (dUTP route): step 2/2. Functionally, this enzyme is involved in nucleotide metabolism: it produces dUMP, the immediate precursor of thymidine nucleotides and it decreases the intracellular concentration of dUTP so that uracil cannot be incorporated into DNA. This Chlamydia muridarum (strain MoPn / Nigg) protein is Deoxyuridine 5'-triphosphate nucleotidohydrolase.